A 295-amino-acid chain; its full sequence is GTPase Era (295 aa).

The Era-type G domain occupies 5 to 172 (YCGYAAIIGR…EQAVHQLMPE (168 aa)). Residues 13 to 20 (GRPNVGKS) form a G1 region. 13–20 (GRPNVGKS) contributes to the GTP binding site. The segment at 39–43 (QTTRY) is G2. The segment at 60–63 (DTPG) is G3. GTP-binding positions include 60–64 (DTPGL) and 121–124 (NKVD). Residues 121–124 (NKVD) are G4. The G5 stretch occupies residues 151-153 (LSA). Residues 203–279 (LGQEIPYSLA…FLQLWVKVKS (77 aa)) enclose the KH type-2 domain.

This sequence belongs to the TRAFAC class TrmE-Era-EngA-EngB-Septin-like GTPase superfamily. Era GTPase family. Monomer.

The protein resides in the cytoplasm. Its subcellular location is the cell inner membrane. Functionally, an essential GTPase that binds both GDP and GTP, with rapid nucleotide exchange. Plays a role in 16S rRNA processing and 30S ribosomal subunit biogenesis and possibly also in cell cycle regulation and energy metabolism. This Coxiella burnetii (strain RSA 331 / Henzerling II) protein is GTPase Era.